A 466-amino-acid polypeptide reads, in one-letter code: 23S rRNA (uracil(1939)-C(5))-methyltransferase RlmD (466 aa).

The 54-residue stretch at 1–54 (MVDVLNIESLDLEARGIAHRDGKVLFVEGALPGERVTVQTVRRKPSYEIAKVEE) folds into the TRAM domain. Residues Cys-67, Cys-73, Cys-76, and Cys-155 each coordinate [4Fe-4S] cluster. 6 residues coordinate S-adenosyl-L-methionine: Gln-264, Phe-293, Asn-298, Glu-314, Asn-342, and Asp-363. The active-site Nucleophile is the Cys-393.

It belongs to the class I-like SAM-binding methyltransferase superfamily. RNA M5U methyltransferase family. RlmD subfamily.

The catalysed reaction is uridine(1939) in 23S rRNA + S-adenosyl-L-methionine = 5-methyluridine(1939) in 23S rRNA + S-adenosyl-L-homocysteine + H(+). Its function is as follows. Catalyzes the formation of 5-methyl-uridine at position 1939 (m5U1939) in 23S rRNA. The protein is 23S rRNA (uracil(1939)-C(5))-methyltransferase RlmD of Bordetella pertussis (strain Tohama I / ATCC BAA-589 / NCTC 13251).